A 145-amino-acid chain; its full sequence is Small ribosomal subunit protein uS19 (145 aa).

Alanine 2 is subject to N-acetylalanine. Lysine 108 is covalently cross-linked (Glycyl lysine isopeptide (Lys-Gly) (interchain with G-Cter in SUMO2)).

Belongs to the universal ribosomal protein uS19 family. In terms of assembly, component of the small ribosomal subunit.

The protein localises to the cytoplasm. In terms of biological role, component of the small ribosomal subunit. The ribosome is a large ribonucleoprotein complex responsible for the synthesis of proteins in the cell. This chain is Small ribosomal subunit protein uS19 (RPS15), found in Oryctolagus cuniculus (Rabbit).